A 342-amino-acid chain; its full sequence is Dihydroorotase (342 aa).

Zn(2+) is bound by residues H13 and H15. Substrate-binding positions include 15–17 (HLR) and N41. Residues K99, H136, and H174 each contribute to the Zn(2+) site. K99 is subject to N6-carboxylysine. H136 contributes to the substrate binding site. Residue L218 participates in substrate binding. Position 246 (D246) interacts with Zn(2+). D246 is a catalytic residue. Residues H250 and A262 each contribute to the substrate site.

The protein belongs to the metallo-dependent hydrolases superfamily. DHOase family. Class II DHOase subfamily. As to quaternary structure, homodimer. Zn(2+) serves as cofactor.

It carries out the reaction (S)-dihydroorotate + H2O = N-carbamoyl-L-aspartate + H(+). It participates in pyrimidine metabolism; UMP biosynthesis via de novo pathway; (S)-dihydroorotate from bicarbonate: step 3/3. Catalyzes the reversible cyclization of carbamoyl aspartate to dihydroorotate. This Synechocystis sp. (strain ATCC 27184 / PCC 6803 / Kazusa) protein is Dihydroorotase.